A 241-amino-acid chain; its full sequence is Probable transcriptional regulatory protein Neut_0281 (241 aa).

Belongs to the TACO1 family.

It localises to the cytoplasm. In Nitrosomonas eutropha (strain DSM 101675 / C91 / Nm57), this protein is Probable transcriptional regulatory protein Neut_0281.